A 156-amino-acid chain; its full sequence is Small ribosomal subunit protein uS7 (156 aa).

Belongs to the universal ribosomal protein uS7 family. In terms of assembly, part of the 30S ribosomal subunit. Contacts proteins S9 and S11.

One of the primary rRNA binding proteins, it binds directly to 16S rRNA where it nucleates assembly of the head domain of the 30S subunit. Is located at the subunit interface close to the decoding center, probably blocks exit of the E-site tRNA. The polypeptide is Small ribosomal subunit protein uS7 (Tropheryma whipplei (strain TW08/27) (Whipple's bacillus)).